A 186-amino-acid chain; its full sequence is GTP cyclohydrolase 1 1 (186 aa).

It belongs to the GTP cyclohydrolase I family. In terms of assembly, homomer.

The catalysed reaction is GTP + H2O = 7,8-dihydroneopterin 3'-triphosphate + formate + H(+). The protein operates within cofactor biosynthesis; 7,8-dihydroneopterin triphosphate biosynthesis; 7,8-dihydroneopterin triphosphate from GTP: step 1/1. The sequence is that of GTP cyclohydrolase 1 1 (folE1) from Pseudomonas aeruginosa (strain ATCC 15692 / DSM 22644 / CIP 104116 / JCM 14847 / LMG 12228 / 1C / PRS 101 / PAO1).